Here is a 1088-residue protein sequence, read N- to C-terminus: MGKYNLILSEYLSFIYNSQSAVQIPIYYSSNSELESRCIEFHSKCLENSKNGLSLKKLFIEYNDVIENATLLSILSYSYDKYNAVERKLAKYARGKPLEADLTVNELDYENNKITSELFPTAEEYTDSLMDPAILTSLSSNLNAVMFWLEKHENDTAEKLKIYKRRLDLFTIVASTVNKYGVPRHNAKYRYEYDVMKDKPYYLVTWANSSIEMLMSVFSHEDYLIARELIVLSYSNRSTLAKLVSSPMSILVALVDINGTFITNEELELEFSNKYVRAIVPDQTFNELNQMLDNMRKAGLVDIPKMIQDWLTDCSIEKFPLMAKIYSWSFHVGFRKQKMLDAALDQLKTEYTEDVDEEMYREYTMLIRDEVVKMLEEPVKHDDHLLQDSELAGLLSMSSASNGESRQLKFGRKTIFSTKKNMHVMDDMANGRYTPGIIPPVNVDKPIPLGRRDVPGRRTRIIFILPYEYFIAQHAVVEKMLIYAKHTREYAEFYSQSNQLLSYGDVTRFLSNNAMVLYTDVSQWDSSQHNTQPFRKGIIMGLDILANMTNDTRVIQTLNLYKQTQINLMNSYVQIPDGNIIKKIQYGAVASGEKQTKAANSIANLALIKTVLSRISNKYSFVTKIIRVDGDDNYAVLQFNTEVTKQMVQDVSNDVRETYARMNAKVKALVSTVGIEIAKRYIAGGKIFFRAGINLLNNEKRGQNTQWDQAAVLYSNYIVNRLRGFETDREFILTKIMQMTSVAITGSLRLFPSERVLTTNSTFKIFDSEDFIIEYGTTDDEVYIQRAFMSLSSQRSGIADEIAASTTFKNYISKLSEQLLFSKNNIVSKGIALTEKAKLNSYAPISLEKRRAQISALLTMLQKPVTFKSSKITINDILRDIKPFFTLREAHLPIQYQKFMPTLPENVQYIIQCIGSRTYQIEDDGSKSAISRLISKYSVYKPSIEELYKVISLHENEIQLYLISLGIPKIDADTYVGSKIYSQDKYRILESYVYNLLSINYGCYQLFDFNSPDLEKLIRIPFKGKIPAVTFILHLYAKLEIINYAIKNGSWISLFCNYPKSEMIKLWKKMWNITSLRSPYTNANFFQD.

The RdRp catalytic domain maps to Leu-501–Ile-687.

The protein belongs to the reoviridae RNA-directed RNA polymerase family. In terms of assembly, interacts with VP3 (Potential). Interacts with VP2; this interaction activates VP1. Interacts with NSP5; this interaction is probably necessary for the formation of functional virus factories. Interacts with NSP2; this interaction is weak. It depends on Mg(2+) as a cofactor.

It is found in the virion. It catalyses the reaction RNA(n) + a ribonucleoside 5'-triphosphate = RNA(n+1) + diphosphate. Functionally, RNA-directed RNA polymerase that is involved in both transcription and genome replication. Together with VP3 capping enzyme, forms an enzyme complex positioned near the channels situated at each of the five-fold vertices of the core. Following infection, the outermost layer of the virus is lost, leaving a double-layered particle (DLP) made up of the core and VP6 shell. VP1 then catalyzes the transcription of fully conservative plus-strand genomic RNAs that are extruded through the DLP's channels into the cytoplasm where they function as mRNAs for translation of viral proteins. One copy of each of the viral (+)RNAs is also recruited during core assembly, together with newly synthesized polymerase complexes and VP2. The polymerase of these novo-formed particles catalyzes the synthesis of complementary minus-strands leading to dsRNA formation. To do so, the polymerase specifically recognizes and binds 4 bases 5'-UGUG-3' in the conserved 3'-sequence of plus-strand RNA templates. VP2 presumably activates the autoinhibited VP1-RNA complex to coordinate packaging and genome replication. Once dsRNA synthesis is complete, the polymerase switches to the transcriptional mode, thus providing secondary transcription. The chain is RNA-directed RNA polymerase from Rotavirus A (strain RVA/Human/Philippines/L26/1987/G12P1B[4]) (RV-A).